The sequence spans 431 residues: Trigger factor (431 aa).

Positions 163–248 (GDTAVLDFEG…IHDVKRKELP (86 aa)) constitute a PPIase FKBP-type domain.

The protein belongs to the FKBP-type PPIase family. Tig subfamily.

It is found in the cytoplasm. The enzyme catalyses [protein]-peptidylproline (omega=180) = [protein]-peptidylproline (omega=0). Functionally, involved in protein export. Acts as a chaperone by maintaining the newly synthesized protein in an open conformation. Functions as a peptidyl-prolyl cis-trans isomerase. The sequence is that of Trigger factor (tig) from Halalkalibacterium halodurans (strain ATCC BAA-125 / DSM 18197 / FERM 7344 / JCM 9153 / C-125) (Bacillus halodurans).